The primary structure comprises 95 residues: Large ribosomal subunit protein uL23c (95 aa).

Belongs to the universal ribosomal protein uL23 family. Part of the 50S ribosomal subunit.

The protein resides in the plastid. The protein localises to the chloroplast. Its function is as follows. Binds to 23S rRNA. This is Large ribosomal subunit protein uL23c (rpl23) from Guillardia theta (Cryptophyte).